Consider the following 326-residue polypeptide: Nucleoporin Nup37 (326 aa).

WD repeat units follow at residues 6–54 (SRNA…FQEE), 61–109 (IQYK…LFTS), 115–154 (NEYK…IWNL), 159–195 (TAHF…FYDL), 199–237 (QAIL…IWDI), 242–282 (YPQN…QFQI), and 287–324 (HPQP…FWVT).

Component of the Nup107-160 subcomplex of the nuclear pore complex (NPC). The Nup107-160 subcomplex includes NUP160, NUP133, NUP107, NUP98, NUP85, NUP43, NUP37, SEH1 and SEC13.

Its subcellular location is the chromosome. It is found in the centromere. The protein localises to the kinetochore. It localises to the nucleus. The protein resides in the nuclear pore complex. Component of the Nup107-160 subcomplex of the nuclear pore complex (NPC). The Nup107-160 subcomplex is required for the assembly of a functional NPC. The Nup107-160 subcomplex is also required for normal kinetochore microtubule attachment, mitotic progression and chromosome segregation. This chain is Nucleoporin Nup37 (NUP37), found in Homo sapiens (Human).